We begin with the raw amino-acid sequence, 228 residues long: DNA mismatch repair protein MutH (228 aa).

The protein belongs to the MutH family.

The protein resides in the cytoplasm. Its function is as follows. Sequence-specific endonuclease that cleaves unmethylated GATC sequences. It is involved in DNA mismatch repair. The chain is DNA mismatch repair protein MutH from Photorhabdus laumondii subsp. laumondii (strain DSM 15139 / CIP 105565 / TT01) (Photorhabdus luminescens subsp. laumondii).